A 302-amino-acid polypeptide reads, in one-letter code: Sulfate adenylyltransferase subunit 2 (302 aa).

The protein belongs to the PAPS reductase family. CysD subfamily. Heterodimer composed of CysD, the smaller subunit, and CysN.

It carries out the reaction sulfate + ATP + H(+) = adenosine 5'-phosphosulfate + diphosphate. It functions in the pathway sulfur metabolism; hydrogen sulfide biosynthesis; sulfite from sulfate: step 1/3. Functionally, with CysN forms the ATP sulfurylase (ATPS) that catalyzes the adenylation of sulfate producing adenosine 5'-phosphosulfate (APS) and diphosphate, the first enzymatic step in sulfur assimilation pathway. APS synthesis involves the formation of a high-energy phosphoric-sulfuric acid anhydride bond driven by GTP hydrolysis by CysN coupled to ATP hydrolysis by CysD. The polypeptide is Sulfate adenylyltransferase subunit 2 (Salmonella paratyphi A (strain AKU_12601)).